The chain runs to 287 residues: 4-hydroxybenzoate octaprenyltransferase (287 aa).

5 consecutive transmembrane segments (helical) span residues 20-38, 95-115, 211-231, 235-255, and 266-286; these read IGTL…FAAG, IVFL…NPLV, IIAA…LIAE, IYGG…KLIF, and FLNN…DYLV.

Belongs to the UbiA prenyltransferase family. It depends on Mg(2+) as a cofactor.

Its subcellular location is the cell inner membrane. The catalysed reaction is all-trans-octaprenyl diphosphate + 4-hydroxybenzoate = 4-hydroxy-3-(all-trans-octaprenyl)benzoate + diphosphate. Its pathway is cofactor biosynthesis; ubiquinone biosynthesis. Catalyzes the prenylation of para-hydroxybenzoate (PHB) with an all-trans polyprenyl group. Mediates the second step in the final reaction sequence of ubiquinone-8 (UQ-8) biosynthesis, which is the condensation of the polyisoprenoid side chain with PHB, generating the first membrane-bound Q intermediate 3-octaprenyl-4-hydroxybenzoate. The polypeptide is 4-hydroxybenzoate octaprenyltransferase (Shewanella piezotolerans (strain WP3 / JCM 13877)).